Consider the following 216-residue polypeptide: Nucleolar protein 12 (216 aa).

Residues 33 to 97 (GFHKRKVERK…LVTAKTESVQ (65 aa)) are a coiled coil. Positions 120-216 (LLGLPLPEQG…MTGKARHNGE (97 aa)) are disordered. Residues 129-140 (GDQDGSQEEEVS) show a composition bias toward acidic residues. Composition is skewed to basic residues over residues 171 to 183 (AHSRKKVKRKHPR) and 200 to 216 (KTQRRRRMTGKARHNGE).

It belongs to the RRP17 family. Interacts with KIAA1191.

The protein resides in the nucleus. It is found in the nucleolus. Its subcellular location is the cytoplasm. Functionally, multifunctional RNA binding protein that plays a role in RNA metabolism and DNA maintenance. Participates in the resolution of DNA stress and the maintenance of genome integrity by localizing to sites of DNA insults. Also plays a role in proper nucleolar organization by limiting nucleolar size and regulating nucleolar number. Mechanistically, regulates the nucleolar levels of fibrillarin and nucleolin, two key players in pre-rRNA processing and ribosome assembly. This Rattus norvegicus (Rat) protein is Nucleolar protein 12 (Nol12).